The primary structure comprises 188 residues: Ubiquitin-like protein 4B (188 aa).

A Ubiquitin-like domain is found at 1 to 76 (MFLTVKLLLG…INVIMRPPED (76 aa)). The tract at residues 146-188 (EEKEAPAVASELEQNNGGGGGGGGTGGEGGGKKEEEEGEEADQ) is disordered. Residues 161 to 174 (NGGGGGGGGTGGEG) show a composition bias toward gly residues.

Expressed specifically in post-meiotic male germ cells of the testis. Abundantly expressed in stage 14-16 spermatids.

It localises to the cytoplasm. The polypeptide is Ubiquitin-like protein 4B (Ubl4b) (Mus musculus (Mouse)).